A 447-amino-acid polypeptide reads, in one-letter code: GTPase Era, mitochondrial (447 aa).

A mitochondrion-targeting transit peptide spans 1 to 18; it reads MTLRSCETFLRRSLRFST. Residues 109 to 340 form the Era-type G domain; that stretch reads KSLKVAIVGS…RYLFVAAKPC (232 aa). The segment at 117–124 is G1; the sequence is GSPNAGKS. Position 117–124 (117–124) interacts with GTP; that stretch reads GSPNAGKS. Residues 143–147 are G2; sequence HTTRS. The interval 164–167 is G3; that stretch reads DTPG. Residues 164-168 and 233-236 each bind GTP; these read DTPGL and NKVD. The segment at 233 to 236 is G4; that stretch reads NKVD. A G5 region spans residues 318–320; sequence LSS. Positions 370-447 constitute a KH type-2 domain; sequence LPKEVPYTMT…RLKISVKLRK (78 aa).

This sequence belongs to the TRAFAC class TrmE-Era-EngA-EngB-Septin-like GTPase superfamily. Era GTPase family.

The protein localises to the mitochondrion matrix. It localises to the mitochondrion inner membrane. Its function is as follows. Probable GTPase that plays a role in the mitochondrial ribosomal small subunit assembly. Specifically binds the 12S mitochondrial rRNA (12S mt-rRNA) to a 33 nucleotide section delineating the 3' terminal stem-loop region. May act as a chaperone that protects the 12S mt-rRNA on the 28S mitoribosomal subunit during ribosomal small subunit assembly. The sequence is that of GTPase Era, mitochondrial (eral1) from Danio rerio (Zebrafish).